The sequence spans 326 residues: Interleukin-1-binding protein (326 aa).

Positions methionine 1–valine 18 are cleaved as a signal peptide. Ig-like domains lie at proline 24–threonine 115, serine 122–lysine 212, and proline 221–threonine 322. An intrachain disulfide couples cysteine 48 to cysteine 99. 3 N-linked (GlcNAc...) asparagine; by host glycosylation sites follow: asparagine 80, asparagine 103, and asparagine 113. The cysteines at positions 143 and 194 are disulfide-linked. Asparagine 206 and asparagine 237 each carry an N-linked (GlcNAc...) asparagine; by host glycan. Cysteines 242 and 309 form a disulfide.

The protein belongs to the interleukin-1 receptor family. As to quaternary structure, interacts with mouse Il1b.

The protein localises to the secreted. Functionally, may reduce the host inflammatory response by interacting with inteleukin-1 beta (Il1b) and thus decreasing the association between IL1B and its cellular receptor. The polypeptide is Interleukin-1-binding protein (OPG201) (Vaccinia virus (strain Western Reserve) (VACV)).